The sequence spans 454 residues: tRNA modification GTPase MnmE (454 aa).

(6S)-5-formyl-5,6,7,8-tetrahydrofolate is bound by residues R23, E80, and K120. The TrmE-type G domain maps to 216-377 (GMKVVIAGRP…LREHLKQSMG (162 aa)). N226 provides a ligand contact to K(+). Residues 226–231 (NAGKSS), 245–251 (TDIAGTT), and 270–273 (DTAG) contribute to the GTP site. S230 is a Mg(2+) binding site. Residues T245, I247, and T250 each contribute to the K(+) site. Residue T251 coordinates Mg(2+). K454 is a binding site for (6S)-5-formyl-5,6,7,8-tetrahydrofolate.

It belongs to the TRAFAC class TrmE-Era-EngA-EngB-Septin-like GTPase superfamily. TrmE GTPase family. Homodimer. Heterotetramer of two MnmE and two MnmG subunits. It depends on K(+) as a cofactor.

It localises to the cytoplasm. Exhibits a very high intrinsic GTPase hydrolysis rate. Involved in the addition of a carboxymethylaminomethyl (cmnm) group at the wobble position (U34) of certain tRNAs, forming tRNA-cmnm(5)s(2)U34. The chain is tRNA modification GTPase MnmE from Mannheimia succiniciproducens (strain KCTC 0769BP / MBEL55E).